We begin with the raw amino-acid sequence, 122 residues long: Small ribosomal subunit protein bS6 (122 aa).

The protein belongs to the bacterial ribosomal protein bS6 family.

Its function is as follows. Binds together with bS18 to 16S ribosomal RNA. The polypeptide is Small ribosomal subunit protein bS6 (Neisseria meningitidis serogroup C (strain 053442)).